A 178-amino-acid polypeptide reads, in one-letter code: Fatty-acid and retinol-binding protein 1 (178 aa).

A signal peptide spans 1–16; sequence MYHRLILLALIGTTMA. 2 coiled-coil regions span residues 67–89 and 130–153; these read DAAL…ELRN and KQAA…ELKV.

Belongs to the fatty-acid and retinol-binding protein (FARBP) family. Post-translationally, not glycosylated.

It is found in the secreted. Binds retinol and different fatty acids. This is Fatty-acid and retinol-binding protein 1 from Wuchereria bancrofti.